A 277-amino-acid polypeptide reads, in one-letter code: Energy-coupling factor transporter ATP-binding protein EcfA1 (277 aa).

Residues 4-238 form the ABC transporter domain; it reads IETQDLCHTY…PDLLSSVRLD (235 aa). An ATP-binding site is contributed by 37-44; it reads GPNGAGKS.

Belongs to the ABC transporter superfamily. Energy-coupling factor EcfA family. In terms of assembly, forms a stable energy-coupling factor (ECF) transporter complex composed of 2 membrane-embedded substrate-binding proteins (S component), 2 ATP-binding proteins (A component) and 2 transmembrane proteins (T component).

It is found in the cell membrane. Functionally, ATP-binding (A) component of a common energy-coupling factor (ECF) ABC-transporter complex. Unlike classic ABC transporters this ECF transporter provides the energy necessary to transport a number of different substrates. The sequence is that of Energy-coupling factor transporter ATP-binding protein EcfA1 from Methanospirillum hungatei JF-1 (strain ATCC 27890 / DSM 864 / NBRC 100397 / JF-1).